A 358-amino-acid polypeptide reads, in one-letter code: Phospho-N-acetylmuramoyl-pentapeptide-transferase (358 aa).

A run of 10 helical transmembrane segments spans residues 28–48 (WALATALLVSIVVGPRFIAWL), 72–92 (TMGGLLIGFAVTFSVLLWADL), 96–116 (YIWLTLLVFTGFGFIGFLDDY), 133–153 (FLWQVGVAVAAMYLLVQLPAY), 164–184 (GLTPDLGWLYIPFAVAVMVGS), 196–216 (GLAIGPTIVAGIVFSIFIYVA), 233–253 (VGEVAVFCGALVGAGLGFLWF), 260–280 (VFMGDVGSLSLGGTLGFLAVL), 285–305 (LLLLVVGGLFVVETLSVILQV), and 335–355 (KIIIRFWITSALLGLIALSVL).

This sequence belongs to the glycosyltransferase 4 family. MraY subfamily. The cofactor is Mg(2+).

It is found in the cell inner membrane. It catalyses the reaction UDP-N-acetyl-alpha-D-muramoyl-L-alanyl-gamma-D-glutamyl-meso-2,6-diaminopimeloyl-D-alanyl-D-alanine + di-trans,octa-cis-undecaprenyl phosphate = di-trans,octa-cis-undecaprenyl diphospho-N-acetyl-alpha-D-muramoyl-L-alanyl-D-glutamyl-meso-2,6-diaminopimeloyl-D-alanyl-D-alanine + UMP. It participates in cell wall biogenesis; peptidoglycan biosynthesis. Its function is as follows. Catalyzes the initial step of the lipid cycle reactions in the biosynthesis of the cell wall peptidoglycan: transfers peptidoglycan precursor phospho-MurNAc-pentapeptide from UDP-MurNAc-pentapeptide onto the lipid carrier undecaprenyl phosphate, yielding undecaprenyl-pyrophosphoryl-MurNAc-pentapeptide, known as lipid I. This is Phospho-N-acetylmuramoyl-pentapeptide-transferase from Nitratidesulfovibrio vulgaris (strain ATCC 29579 / DSM 644 / CCUG 34227 / NCIMB 8303 / VKM B-1760 / Hildenborough) (Desulfovibrio vulgaris).